A 753-amino-acid polypeptide reads, in one-letter code: 5-methyltetrahydropteroyltriglutamate--homocysteine methyltransferase (753 aa).

5-methyltetrahydropteroyltri-L-glutamate is bound by residues R17 to K20 and K117. Residues I431–S433 and E484 contribute to the L-homocysteine site. L-methionine is bound by residues I431–S433 and E484. Residues R515 to C516 and W561 each bind 5-methyltetrahydropteroyltri-L-glutamate. Position 599 (D599) interacts with L-homocysteine. Residue D599 participates in L-methionine binding. E605 is a binding site for 5-methyltetrahydropteroyltri-L-glutamate. Residues H641, C643, and E665 each coordinate Zn(2+). The active-site Proton donor is the H694. A Zn(2+)-binding site is contributed by C726.

Belongs to the vitamin-B12 independent methionine synthase family. Zn(2+) serves as cofactor.

The catalysed reaction is 5-methyltetrahydropteroyltri-L-glutamate + L-homocysteine = tetrahydropteroyltri-L-glutamate + L-methionine. It functions in the pathway amino-acid biosynthesis; L-methionine biosynthesis via de novo pathway; L-methionine from L-homocysteine (MetE route): step 1/1. Functionally, catalyzes the transfer of a methyl group from 5-methyltetrahydrofolate to homocysteine resulting in methionine formation. This is 5-methyltetrahydropteroyltriglutamate--homocysteine methyltransferase from Enterobacter sp. (strain 638).